Here is a 292-residue protein sequence, read N- to C-terminus: Ribosomal RNA small subunit methyltransferase A (292 aa).

Residues Asn28, Leu30, Gly55, Glu76, Asp101, and Asn126 each coordinate S-adenosyl-L-methionine.

Belongs to the class I-like SAM-binding methyltransferase superfamily. rRNA adenine N(6)-methyltransferase family. RsmA subfamily.

It localises to the cytoplasm. The catalysed reaction is adenosine(1518)/adenosine(1519) in 16S rRNA + 4 S-adenosyl-L-methionine = N(6)-dimethyladenosine(1518)/N(6)-dimethyladenosine(1519) in 16S rRNA + 4 S-adenosyl-L-homocysteine + 4 H(+). Functionally, specifically dimethylates two adjacent adenosines (A1518 and A1519) in the loop of a conserved hairpin near the 3'-end of 16S rRNA in the 30S particle. May play a critical role in biogenesis of 30S subunits. This chain is Ribosomal RNA small subunit methyltransferase A, found in Bacillus cytotoxicus (strain DSM 22905 / CIP 110041 / 391-98 / NVH 391-98).